The sequence spans 452 residues: Bifunctional protein GlmU (452 aa).

Residues 1 to 226 (MSLHIIILAA…LHEVEGVNNR (226 aa)) are pyrophosphorylase. Residues 8–11 (LAAG), Lys22, Gln73, 78–79 (GT), 100–102 (YGD), Gly136, Glu151, Asn166, and Asn224 contribute to the UDP-N-acetyl-alpha-D-glucosamine site. A Mg(2+)-binding site is contributed by Asp102. Position 224 (Asn224) interacts with Mg(2+). A linker region spans residues 227 to 247 (IQLAALERAYQQQVAEELMLA). The tract at residues 248–452 (GATLRDPARV…IDGWTRPVKK (205 aa)) is N-acetyltransferase. UDP-N-acetyl-alpha-D-glucosamine contacts are provided by Arg330 and Lys348. His360 (proton acceptor) is an active-site residue. Residues Tyr363 and Asn374 each contribute to the UDP-N-acetyl-alpha-D-glucosamine site. Acetyl-CoA is bound by residues Ala377, 383–384 (NY), Ser402, Ala420, and Arg437.

In the N-terminal section; belongs to the N-acetylglucosamine-1-phosphate uridyltransferase family. It in the C-terminal section; belongs to the transferase hexapeptide repeat family. As to quaternary structure, homotrimer. Mg(2+) is required as a cofactor.

It is found in the cytoplasm. The enzyme catalyses alpha-D-glucosamine 1-phosphate + acetyl-CoA = N-acetyl-alpha-D-glucosamine 1-phosphate + CoA + H(+). It carries out the reaction N-acetyl-alpha-D-glucosamine 1-phosphate + UTP + H(+) = UDP-N-acetyl-alpha-D-glucosamine + diphosphate. The protein operates within nucleotide-sugar biosynthesis; UDP-N-acetyl-alpha-D-glucosamine biosynthesis; N-acetyl-alpha-D-glucosamine 1-phosphate from alpha-D-glucosamine 6-phosphate (route II): step 2/2. It functions in the pathway nucleotide-sugar biosynthesis; UDP-N-acetyl-alpha-D-glucosamine biosynthesis; UDP-N-acetyl-alpha-D-glucosamine from N-acetyl-alpha-D-glucosamine 1-phosphate: step 1/1. It participates in bacterial outer membrane biogenesis; LPS lipid A biosynthesis. Its function is as follows. Catalyzes the last two sequential reactions in the de novo biosynthetic pathway for UDP-N-acetylglucosamine (UDP-GlcNAc). The C-terminal domain catalyzes the transfer of acetyl group from acetyl coenzyme A to glucosamine-1-phosphate (GlcN-1-P) to produce N-acetylglucosamine-1-phosphate (GlcNAc-1-P), which is converted into UDP-GlcNAc by the transfer of uridine 5-monophosphate (from uridine 5-triphosphate), a reaction catalyzed by the N-terminal domain. In Hahella chejuensis (strain KCTC 2396), this protein is Bifunctional protein GlmU.